We begin with the raw amino-acid sequence, 198 residues long: Cerebellin-4 (198 aa).

A signal peptide spans 1-24; the sequence is MGSARRALSVVPAVLLILVLPVWA. 2 N-linked (GlcNAc...) asparagine glycosylation sites follow: Asn26 and Asn85. A C1q domain is found at 63-198; it reads AANSKVAFSA…TFSGFLVFPL (136 aa).

As to quaternary structure, homohexamer; disulfide-linked homotrimers. The trimers are assembled via the globular C1q domains. The trimers associate via N-terminal cysteine residues to form disulfide-linked hexamers. May form oligomers with CBLN1, CBLN2 and CBLN3 prior to secretion. Once secreted, does not interact with other CBLN family members. Strongly interacts with DCC in a NTN1-displaceable fashion. Weakly binds to NRXN1 and NRXN2 long and short isoforms produced by alternative promoter usage. Interaction with NRXN3 short isoform is hardly detectable; no interaction at all with NRXN3 long isoform. Does not interact with NEO1, GRID1 and GRID2. Post-translationally, sialoglycoprotein. As to expression, expressed in brain with high levels in particular thalamic nuclei. In the thalamus, predominantly expressed in neurons within the parafascicular nucleus. Found in the hippocampus, mostly in the dendrites and somata of pyramidal neurons (at protein level). Very low or no expression in most other brain regions. Highly expressed in the ventral medial habenula.

It localises to the secreted. The protein resides in the synapse. In terms of biological role, acts as a synaptic organizer in specific subsets of neurons in the brain. Essential for the formation and maintenance of inhibitory GABAergic synapses. Promotes the development of dendrite-targeting inhibitory GABAergic synapses made by somatostatin-positive interneurons. May contribute to the function of ventral medial habenula region of the brain implicated in the regulation of anxiety-related behaviors. May play a role in CBLN3 export from the endoplasmic reticulum and secretion. This is Cerebellin-4 (Cbln4) from Mus musculus (Mouse).